The sequence spans 318 residues: Cytochrome c biogenesis protein CcsA (318 aa).

8 consecutive transmembrane segments (helical) span residues 17–37, 45–65, 75–95, 104–124, 149–169, 224–244, 258–275, and 287–307; these read VLAL…ISFW, SAVV…QLVL, ISNL…AQLL, IVSA…SFAL, VIMC…AVLF, TITV…VWAN, TWAL…HTRF, and VAVA…LLGI.

The protein belongs to the CcmF/CycK/Ccl1/NrfE/CcsA family. May interact with ccs1.

The protein localises to the cellular thylakoid membrane. Required during biogenesis of c-type cytochromes (cytochrome c6 and cytochrome f) at the step of heme attachment. The sequence is that of Cytochrome c biogenesis protein CcsA from Prochlorococcus marinus (strain MIT 9303).